A 999-amino-acid chain; its full sequence is Protein Smaug (999 aa).

Residues 1-37 show a composition bias toward polar residues; sequence MKYATGTDNAMTSGISGQTNNSNSVSNEMQPTTSTPT. Disordered regions lie at residues 1–45, 50–69, and 321–370; these read MKYA…EATS, TATY…QSQP, and CSSV…GSSS. Residues 321-338 are compositionally biased toward low complexity; it reads CSSVASSSMCPASGSRSS. Phosphoserine is present on residues serine 564 and serine 575. The tract at residues 583–763 is interaction with cup; sequence EFKPNYIKFH…KDLKFKLSKM (181 aa). The 55-residue stretch at 600-654 folds into the SAM domain; sequence GIGLWLKSLRLHKYIELFKNMTYEEMLLITEDFLQSVGVTKGASHKLALCIDKLK. Residues 773-892 form a disordered region; it reads HVKPAGVGPN…HHHAQQMQQM (120 aa). Composition is skewed to polar residues over residues 801–822 and 854–864; these read KNGS…NFSL and HQPQYKSSSYP. Serine 972 is modified (phosphoserine).

The protein belongs to the SMAUG family. As to quaternary structure, interacts with oskar (osk). Binds to the 3'-UTR of nos. Interacts with cup, which in turn recruits eIF4-E, leading to an indirect interaction between smg and eIF4-E that prevents mRNA translation.

Its subcellular location is the cytoplasm. Translation regulator that binds to the 3'-UTR of specific mRNAs such as nanos (nos) and prevent their translation. Prevents translation of unlocalized nos in the bulk cytoplasm via the recruitment of cup. This Drosophila yakuba (Fruit fly) protein is Protein Smaug (smg).